A 651-amino-acid polypeptide reads, in one-letter code: Maternal embryonic leucine zipper kinase (651 aa).

A Protein kinase domain is found at 11 to 263 (YELHETIGTG…MKNLLNHPWI (253 aa)). ATP contacts are provided by residues 17 to 25 (IGTGGFAKV) and Lys-40. A Phosphothreonine; by autocatalysis modification is found at Thr-56. The active-site Proton acceptor is Asp-132. Position 163 is a phosphotyrosine; by autocatalysis (Tyr-163). Thr-167 is subject to Phosphothreonine; by autocatalysis. 2 positions are modified to phosphoserine; by autocatalysis: Ser-171 and Ser-253. A UBA-like region spans residues 282-321 (LDDDCVTELSVHHRNNRQTMEDLISLWQYDHLTATYLLLL). The segment at 326 to 651 (RGKPVRLRLS…VEDILSSCKV (326 aa)) is autoinhibitory region. 3 positions are modified to phosphoserine; by autocatalysis: Ser-336, Ser-343, and Ser-356. A Phosphotyrosine modification is found at Tyr-367. Phosphoserine; by autocatalysis is present on Ser-391. Thr-398 carries the phosphothreonine; by autocatalysis modification. Ser-407 is modified (phosphoserine; by autocatalysis). Thr-409 bears the Phosphothreonine mark. A Phosphoserine; by autocatalysis modification is found at Ser-431. Residue Thr-478 is modified to Phosphothreonine. At Thr-494 the chain carries Phosphothreonine; by autocatalysis. Ser-498 is subject to Phosphoserine. At Ser-505 the chain carries Phosphoserine; by autocatalysis. Thr-518 is subject to Phosphothreonine. A Phosphoserine; by autocatalysis modification is found at Ser-529. Ser-529 carries the phosphoserine modification. At Thr-539 the chain carries Phosphothreonine; by autocatalysis. In terms of domain architecture, KA1 spans 602-651 (SDFGKVTMQFELEVCQLQKPDVVGIRRQRLKGDAWVYKRLVEDILSSCKV).

The protein belongs to the protein kinase superfamily. CAMK Ser/Thr protein kinase family. SNF1 subfamily. As to quaternary structure, monomer. Interacts with ZNF622 and PPP1R8. Autophosphorylated: autophosphorylation of the T-loop at Thr-167 and Ser-171 is required for activation. Thr-478 phosphorylation during mitosis promotes interaction with PPP1R8. As to expression, expressed in placenta, kidney, thymus, testis, ovary and intestine.

Its subcellular location is the cell membrane. It carries out the reaction L-tyrosyl-[protein] + ATP = O-phospho-L-tyrosyl-[protein] + ADP + H(+). It catalyses the reaction L-seryl-[protein] + ATP = O-phospho-L-seryl-[protein] + ADP + H(+). The enzyme catalyses L-threonyl-[protein] + ATP = O-phospho-L-threonyl-[protein] + ADP + H(+). Its activity is regulated as follows. Activated by autophosphorylation of the T-loop at Thr-167 and Ser-171: in contrast to other members of the SNF1 subfamily, phosphorylation at Thr-167 is not mediated by STK11/LKB1 but via autophosphorylation instead. Inhibited by calcium-binding. Kinase activity is also regulated by reducing agents: dithiothreitol (DTT) or reduced glutathione are required for kinase activity in vitro; such dependence is however not due to the presence of disulfide bonds. Serine/threonine-protein kinase involved in various processes such as cell cycle regulation, self-renewal of stem cells, apoptosis and splicing regulation. Has a broad substrate specificity; phosphorylates BCL2L14, CDC25B, MAP3K5/ASK1 and ZNF622. Acts as an activator of apoptosis by phosphorylating and activating MAP3K5/ASK1. Acts as a regulator of cell cycle, notably by mediating phosphorylation of CDC25B, promoting localization of CDC25B to the centrosome and the spindle poles during mitosis. Plays a key role in cell proliferation and carcinogenesis. Required for proliferation of embryonic and postnatal multipotent neural progenitors. Phosphorylates and inhibits BCL2L14, possibly leading to affect mammary carcinogenesis by mediating inhibition of the pro-apoptotic function of BCL2L14. Also involved in the inhibition of spliceosome assembly during mitosis by phosphorylating ZNF622, thereby contributing to its redirection to the nucleus. May also play a role in primitive hematopoiesis. The polypeptide is Maternal embryonic leucine zipper kinase (MELK) (Homo sapiens (Human)).